The primary structure comprises 837 residues: Cap-specific mRNA (nucleoside-2'-O-)-methyltransferase 1 (837 aa).

The interval 1-66 is disordered; sequence MKRRTDPECT…EGKQPCSDDF (66 aa). The Bipartite nuclear localization signal signature appears at 2–18; that stretch reads KRRTDPECTAPLKKQKR. Phosphoserine is present on residues serine 27, serine 30, and serine 52. Positions 56 to 66 are enriched in basic and acidic residues; sequence TEGKQPCSDDF. Positions 86–132 constitute a G-patch domain; sequence YNSVSQRLMAKMGFREGEGLGKYSQGRKDIVETSNQKGRRGLGLTLQ. Serine 90 bears the Phosphoserine mark. Position 107 is an N6-acetyllysine (lysine 107). Residues 202–206 and arginine 217 each bind substrate; that span reads KSVFD. One can recognise a RrmJ-type SAM-dependent 2'-O-MTase domain in the interval 230-449; that stretch reads FFLNRAAMKM…ERYVVCKGLK (220 aa). S-adenosyl-L-methionine is bound at residue asparagine 233. Lysine 238 is an active-site residue. S-adenosyl-L-methionine is bound by residues 276–282 and 334–335; these read CAGPGGF and DI. Aspartate 363 is a catalytic residue. 373–375 contacts substrate; it reads NLQ. The active-site Proton acceptor is lysine 403. Position 438 (asparagine 438) interacts with substrate. Residues 726-834 form an interaction with POLR2A region; that stretch reads SGGTPKLSYT…VLSFIQSHNP (109 aa). Positions 751-785 constitute a WW domain; the sequence is RTVNEPWTMGFSKSNNRKFFYNKKTQKSVYALPTE.

As to quaternary structure, interacts with POLR2A (via C-terminus).

The protein localises to the nucleus. It catalyses the reaction a 5'-end (N(7)-methyl 5'-triphosphoguanosine)-ribonucleoside in mRNA + S-adenosyl-L-methionine = a 5'-end (N(7)-methyl 5'-triphosphoguanosine)-(2'-O-methyl-ribonucleoside) in mRNA + S-adenosyl-L-homocysteine + H(+). Functionally, S-adenosyl-L-methionine-dependent methyltransferase that mediates mRNA cap1 2'-O-ribose methylation to the 5'-cap structure of mRNAs. Methylates the ribose of the first nucleotide of a m(7)GpppG-capped mRNA and small nuclear RNA (snRNA) to produce m(7)GpppRm (cap1). Displays a preference for cap0 transcripts. Cap1 modification is linked to higher levels of translation. May be involved in the interferon response pathway. The polypeptide is Cap-specific mRNA (nucleoside-2'-O-)-methyltransferase 1 (Cmtr1) (Mus musculus (Mouse)).